The primary structure comprises 288 residues: Acetyl-coenzyme A carboxylase carboxyl transferase subunit beta (288 aa).

The 255-residue stretch at 34–288 (LFAKCPACKH…HLVAFHGGVS (255 aa)) folds into the CoA carboxyltransferase N-terminal domain. Positions 38, 41, 56, and 59 each coordinate Zn(2+). The C4-type zinc finger occupies 38–59 (CPACKHMIYQKDLGPAKICPTC).

Belongs to the AccD/PCCB family. Acetyl-CoA carboxylase is a heterohexamer composed of biotin carboxyl carrier protein (AccB), biotin carboxylase (AccC) and two subunits each of ACCase subunit alpha (AccA) and ACCase subunit beta (AccD). Zn(2+) is required as a cofactor.

The protein resides in the cytoplasm. The enzyme catalyses N(6)-carboxybiotinyl-L-lysyl-[protein] + acetyl-CoA = N(6)-biotinyl-L-lysyl-[protein] + malonyl-CoA. It participates in lipid metabolism; malonyl-CoA biosynthesis; malonyl-CoA from acetyl-CoA: step 1/1. Functionally, component of the acetyl coenzyme A carboxylase (ACC) complex. Biotin carboxylase (BC) catalyzes the carboxylation of biotin on its carrier protein (BCCP) and then the CO(2) group is transferred by the transcarboxylase to acetyl-CoA to form malonyl-CoA. The chain is Acetyl-coenzyme A carboxylase carboxyl transferase subunit beta from Streptococcus equi subsp. zooepidemicus (strain H70).